The sequence spans 233 residues: Tetrahydromethanopterin S-methyltransferase subunit D (233 aa).

Transmembrane regions (helical) follow at residues 4–24, 39–59, 67–87, 133–153, 166–186, and 209–229; these read LLLI…VHFV, VGTG…ITAA, LMIM…TMLV, FVSG…IYWA, MGAA…NAVI, and GIVA…LLVY.

The protein belongs to the MtrD family. As to quaternary structure, the complex is composed of 8 subunits; MtrA, MtrB, MtrC, MtrD, MtrE, MtrF, MtrG and MtrH.

The protein localises to the cell membrane. It catalyses the reaction 5-methyl-5,6,7,8-tetrahydromethanopterin + coenzyme M + 2 Na(+)(in) = 5,6,7,8-tetrahydromethanopterin + methyl-coenzyme M + 2 Na(+)(out). It participates in one-carbon metabolism; methanogenesis from CO(2); methyl-coenzyme M from 5,10-methylene-5,6,7,8-tetrahydromethanopterin: step 2/2. Its function is as follows. Part of a complex that catalyzes the formation of methyl-coenzyme M and tetrahydromethanopterin from coenzyme M and methyl-tetrahydromethanopterin. This is an energy-conserving, sodium-ion translocating step. This is Tetrahydromethanopterin S-methyltransferase subunit D from Methanothermobacter marburgensis (strain ATCC BAA-927 / DSM 2133 / JCM 14651 / NBRC 100331 / OCM 82 / Marburg) (Methanobacterium thermoautotrophicum).